The chain runs to 461 residues: D-phenylhydantoinase (461 aa).

A divalent metal cation contacts are provided by His59, His61, and Lys151. N6-carboxylysine is present on Lys151. Tyr156 contributes to the substrate binding site. A divalent metal cation contacts are provided by His182 and His239. Substrate is bound at residue Ser286. Asp313 contributes to the a divalent metal cation binding site. Residue Asn335 participates in substrate binding.

This sequence belongs to the metallo-dependent hydrolases superfamily. Hydantoinase/dihydropyrimidinase family. As to quaternary structure, homotetramer. A divalent metal cation is required as a cofactor. Post-translationally, carboxylation allows a single lysine to coordinate two divalent metal cations.

The catalysed reaction is D-5-phenylhydantoin + H2O = N-carbamoyl-D-phenylglycine + H(+). Functionally, catalyzes the stereospecific hydrolysis of the cyclic amide bond of D-hydantoin derivatives with an aromatic side chains at the 5'-position. Has no activity on dihydropyrimidines. The physiological function is unknown. This chain is D-phenylhydantoinase, found in Escherichia coli (strain SE11).